A 380-amino-acid chain; its full sequence is Cytochrome b (380 aa).

4 consecutive transmembrane segments (helical) span residues 34-54, 78-100, 113-133, and 179-199; these read FGSLLGLFLTMQIITGIILAM, WLMRTMHMNGAAFMFICMYAHMG, TWNIGIIIMIATMATAFMGYV, and FFAFHFVLPFVLIALSGVHLL. Heme b contacts are provided by His84 and His98. His183 and His197 together coordinate heme b. An a ubiquinone-binding site is contributed by His202. 4 helical membrane-spanning segments follow: residues 225–245, 289–309, 324–344, and 349–369; these read FSWKDLLGFAXMILIFCTITL, LGGVVALVGSLIIPATMMLTH, VIFWLFCANFIALSWIGAAPV, and ITLGQVFSMLYFLFFLTAPMI.

It belongs to the cytochrome b family. In terms of assembly, the main subunits of complex b-c1 are: cytochrome b, cytochrome c1 and the Rieske protein. Heme b serves as cofactor.

It localises to the mitochondrion inner membrane. Functionally, component of the ubiquinol-cytochrome c reductase complex (complex III or cytochrome b-c1 complex) that is part of the mitochondrial respiratory chain. The b-c1 complex mediates electron transfer from ubiquinol to cytochrome c. Contributes to the generation of a proton gradient across the mitochondrial membrane that is then used for ATP synthesis. In Xenoturbella bocki (Marine worm), this protein is Cytochrome b (mt:Cyt-b).